The primary structure comprises 104 residues: UPF0473 protein LJ_0477 (104 aa).

It belongs to the UPF0473 family.

In Lactobacillus johnsonii (strain CNCM I-12250 / La1 / NCC 533), this protein is UPF0473 protein LJ_0477.